The following is a 423-amino-acid chain: Probable multifunctional protein ADE2 (423 aa).

The tract at residues 1–263 is SAICAR synthetase; sequence MSSLAEIASR…KVMDITATFS (263 aa). Residues 264-423 form an AIR carboxylase region; sequence KHQQKCHVLV…NIYNANRKLE (160 aa).

The protein in the N-terminal section; belongs to the SAICAR synthetase family. In the C-terminal section; belongs to the AIR carboxylase family. Class II subfamily.

The enzyme catalyses 5-amino-1-(5-phospho-D-ribosyl)imidazole-4-carboxylate + L-aspartate + ATP = (2S)-2-[5-amino-1-(5-phospho-beta-D-ribosyl)imidazole-4-carboxamido]succinate + ADP + phosphate + 2 H(+). It carries out the reaction 5-amino-1-(5-phospho-D-ribosyl)imidazole-4-carboxylate + H(+) = 5-amino-1-(5-phospho-beta-D-ribosyl)imidazole + CO2. It participates in purine metabolism; IMP biosynthesis via de novo pathway; 5-amino-1-(5-phospho-D-ribosyl)imidazole-4-carboxamide from 5-amino-1-(5-phospho-D-ribosyl)imidazole-4-carboxylate: step 1/2. The protein operates within purine metabolism; IMP biosynthesis via de novo pathway; 5-amino-1-(5-phospho-D-ribosyl)imidazole-4-carboxylate from 5-amino-1-(5-phospho-D-ribosyl)imidazole (carboxylase route): step 1/1. The protein is Probable multifunctional protein ADE2 of Caenorhabditis elegans.